The sequence spans 220 residues: CASP-like protein 1E1 (220 aa).

Topologically, residues 1–57 (METPTPRVKPGFNGVGVGMGSSVNGSSRRAGYYMGPAGAVAVAGGGRAAAAAPVDGC) are cytoplasmic. Residues 58-78 (SVALRVFVLAATLVSAVVMGV) traverse the membrane as a helical segment. Topologically, residues 79-108 (DRQTSTIRITVTDALPPLEVPLTANWSYSS) are extracellular. A glycan (N-linked (GlcNAc...) asparagine) is linked at asparagine 103. Residues 109 to 129 (AFVYFVVANAMVCLFSAAALA) form a helical membrane-spanning segment. Over 130–144 (ACRSRAAMVPVMVGD) the chain is Cytoplasmic. The chain crosses the membrane as a helical span at residues 145-165 (LLALALLYSAVGAAAEFGILG). The Extracellular segment spans residues 166 to 187 (ERGNSHVRWPKVCNVYGRFCER). The helical transmembrane segment at 188–208 (AMAAVIVSLIAAFANLVLLML) threads the bilayer. Residues 209-220 (NILTIHKSSSYY) lie on the Cytoplasmic side of the membrane.

It belongs to the Casparian strip membrane proteins (CASP) family. In terms of assembly, homodimer and heterodimers.

It is found in the cell membrane. The protein is CASP-like protein 1E1 of Zea mays (Maize).